The primary structure comprises 320 residues: Homeobox-leucine zipper protein HOX25 (320 aa).

The segment at residues 79–139 (AAARKRRLTA…NRRARWKTKQ (61 aa)) is a DNA-binding region (homeobox). The segment at 138–182 (KQLELDFDRLRAAHDELLAGRTALAADNESLRSQVILLTEKLQAN) is leucine-zipper. Disordered stretches follow at residues 181–209 (ANGK…KSFQ) and 249–282 (DSPE…PSSS). A compositionally biased stretch (acidic residues) spans 265-278 (SEDDCGGAGSDDDY).

This sequence belongs to the HD-ZIP homeobox family. Class I subfamily. Expressed in roots, leaf sheaths and blades and panicles.

The protein resides in the nucleus. Functionally, probable transcription factor. The polypeptide is Homeobox-leucine zipper protein HOX25 (HOX25) (Oryza sativa subsp. japonica (Rice)).